We begin with the raw amino-acid sequence, 400 residues long: Molybdenum-containing formylmethanofuran dehydrogenase 1 subunit C (400 aa).

7 tandem repeats follow at residues 76–88, 95–107, 114–126, 140–152, 159–171, 178–190, and 197–209. The segment at 76–209 is 7 X 13 AA repeats of [GW]-X-X-M-X-X-G-X-I-X-[IV]-X-G; the sequence is GSGMKSGKII…MVSGIIKIHG (134 aa).

The protein in the N-terminal section; belongs to the FwdC/FmdC family. In the C-terminal section; belongs to the molybdenum dinucleotide binding protein family. Consists of five subunits; FmdA, FmdB, FmdC, FmdD, and FmdE.

It catalyses the reaction N-formylmethanofuran + 2 oxidized [2Fe-2S]-[ferredoxin] + H2O = methanofuran + 2 reduced [2Fe-2S]-[ferredoxin] + CO2 + H(+). The protein operates within one-carbon metabolism; methanogenesis from CO(2); 5,10-methenyl-5,6,7,8-tetrahydromethanopterin from CO(2): step 1/3. Inactivated by cyanide. Catalyzes the reversible oxidation of CO(2) and methanofuran (MFR) to N-formylmethanofuran (CHO-MFR). Can only oxidize formylmethanofuran. This enzyme is oxygen-labile. The protein is Molybdenum-containing formylmethanofuran dehydrogenase 1 subunit C (fmdC) of Methanothermobacter marburgensis (strain ATCC BAA-927 / DSM 2133 / JCM 14651 / NBRC 100331 / OCM 82 / Marburg) (Methanobacterium thermoautotrophicum).